Consider the following 61-residue polypeptide: Cytotoxin homolog 2 (61 aa).

Cystine bridges form between Cys-3-Cys-22, Cys-15-Cys-39, Cys-43-Cys-54, and Cys-55-Cys-60.

The protein belongs to the three-finger toxin family. Short-chain subfamily. Orphan group XV sub-subfamily. Expressed by the venom gland.

It localises to the secreted. Its subcellular location is the target cell membrane. Its function is as follows. Has low cytotoxic activity. The sequence is that of Cytotoxin homolog 2 from Naja melanoleuca (Forest cobra).